The sequence spans 650 residues: Acetyl-coenzyme A synthetase (650 aa).

Residues 191–194, Thr-311, and Asn-335 contribute to the CoA site; that span reads RGGR. Residues 387–389, 411–416, Asp-500, and Arg-515 each bind ATP; these read GEP and DTWWQT. CoA is bound at residue Ser-523. An ATP-binding site is contributed by Arg-526. Mg(2+) is bound by residues Val-537, His-539, and Val-542. Residue Arg-584 coordinates CoA. Lys-609 carries the N6-acetyllysine modification.

Belongs to the ATP-dependent AMP-binding enzyme family. It depends on Mg(2+) as a cofactor. In terms of processing, acetylated. Deacetylation by the SIR2-homolog deacetylase activates the enzyme.

The enzyme catalyses acetate + ATP + CoA = acetyl-CoA + AMP + diphosphate. Functionally, catalyzes the conversion of acetate into acetyl-CoA (AcCoA), an essential intermediate at the junction of anabolic and catabolic pathways. AcsA undergoes a two-step reaction. In the first half reaction, AcsA combines acetate with ATP to form acetyl-adenylate (AcAMP) intermediate. In the second half reaction, it can then transfer the acetyl group from AcAMP to the sulfhydryl group of CoA, forming the product AcCoA. The polypeptide is Acetyl-coenzyme A synthetase (Shewanella baltica (strain OS195)).